A 345-amino-acid chain; its full sequence is Adenine deaminase (345 aa).

Residues H20, H22, and H204 each contribute to the Zn(2+) site. The Proton donor role is filled by E207. D285 provides a ligand contact to Zn(2+). Residue D286 participates in substrate binding.

This sequence belongs to the metallo-dependent hydrolases superfamily. Adenosine and AMP deaminases family. Adenine deaminase type 2 subfamily. Zn(2+) is required as a cofactor.

The enzyme catalyses adenine + H2O + H(+) = hypoxanthine + NH4(+). In terms of biological role, catalyzes the hydrolytic deamination of adenine to hypoxanthine. Plays an important role in the purine salvage pathway and in nitrogen catabolism. This chain is Adenine deaminase, found in Ralstonia pickettii (strain 12J).